The chain runs to 714 residues: Forkhead box protein P2 (714 aa).

Over residues 1 to 28 the composition is skewed to polar residues; it reads MMQESATETISNSSMNQNGMSTLSSQLD. Disordered stretches follow at residues 1 to 45 and 284 to 338; these read MMQE…SEVS and KHGG…TGAS. Residues 291 to 304 are compositionally biased toward low complexity; sequence TTNNSSSTTSSTTS. Polar residues predominate over residues 314–323; the sequence is SIVNGQSSVL. A compositionally biased stretch (basic and acidic residues) spans 325 to 336; it reads ARRDSSSHEETG. Residues 345–370 form a C2H2-type zinc finger; that stretch reads GVCKWPGCESICEDFGQFLKHLNNEH. Residues 387–408 are leucine-zipper; it reads VQQLEIQLSKERERLQAMMTHL. The CTBP1-binding stretch occupies residues 421 to 425; the sequence is PLNLV. Residues 437-458 show a composition bias toward low complexity; it reads TSPQSLPQTPTTPTAPVTPITQ. The segment at 437–464 is disordered; it reads TSPQSLPQTPTTPTAPVTPITQGPSVIT. Residues 503–593 constitute a DNA-binding region (fork-head); that stretch reads RPPFTYATLI…SQKITGSPTL (91 aa). Disordered regions lie at residues 648–667 and 677–714; these read LDHI…QPHI and VIAE…EDLE. Positions 698 to 714 are enriched in acidic residues; that stretch reads LEDDREIEEEPLSEDLE.

In terms of assembly, forms homodimers and heterodimers with FOXP1 and FOXP4. Dimerization is required for DNA-binding. Interacts with CTBP1. Interacts with FOXP1. Interacts with TBR1. Interacts with ZMYM2.

It localises to the nucleus. Transcriptional repressor that may play a role in the specification and differentiation of lung epithelium. May also play a role in developing neural, gastrointestinal and cardiovascular tissues. Can act with CTBP1 to synergistically repress transcription but CTPBP1 is not essential. Plays a role in synapse formation by regulating SRPX2 levels. This Macaca mulatta (Rhesus macaque) protein is Forkhead box protein P2 (FOXP2).